The primary structure comprises 345 residues: Phosphate acyltransferase (345 aa).

Belongs to the PlsX family. Homodimer. Probably interacts with PlsY.

The protein resides in the cytoplasm. It carries out the reaction a fatty acyl-[ACP] + phosphate = an acyl phosphate + holo-[ACP]. It functions in the pathway lipid metabolism; phospholipid metabolism. Functionally, catalyzes the reversible formation of acyl-phosphate (acyl-PO(4)) from acyl-[acyl-carrier-protein] (acyl-ACP). This enzyme utilizes acyl-ACP as fatty acyl donor, but not acyl-CoA. This is Phosphate acyltransferase from Dichelobacter nodosus (strain VCS1703A).